The following is a 552-amino-acid chain: uncharacterized protein (552 aa).

Positions 8 to 200 constitute a DhaL domain; it reads KLFAEMIIQG…LAIVYAGFLK (193 aa).

This is an uncharacterized protein from Staphylococcus saprophyticus subsp. saprophyticus (strain ATCC 15305 / DSM 20229 / NCIMB 8711 / NCTC 7292 / S-41).